The sequence spans 159 residues: MSHLIDISIDDSALPPPTPEIEQERKVAIFDLLEDNSFKLPAREDRDVPPGPFSLTLAIRERRLVFDVTGPEGAQVAEFHLSLGPFRQVVKDYWQICESYFDAVKKLPPSQIEAIDMARRGIHNEGARILLERLDGKAEVDIDTSRRLFTLICVLHFGA.

Belongs to the UPF0262 family.

This chain is UPF0262 protein Dshi_0980, found in Dinoroseobacter shibae (strain DSM 16493 / NCIMB 14021 / DFL 12).